The following is a 329-amino-acid chain: Phosphate acyltransferase (329 aa).

It belongs to the PlsX family. In terms of assembly, homodimer. Probably interacts with PlsY.

Its subcellular location is the cytoplasm. It carries out the reaction a fatty acyl-[ACP] + phosphate = an acyl phosphate + holo-[ACP]. Its pathway is lipid metabolism; phospholipid metabolism. In terms of biological role, catalyzes the reversible formation of acyl-phosphate (acyl-PO(4)) from acyl-[acyl-carrier-protein] (acyl-ACP). This enzyme utilizes acyl-ACP as fatty acyl donor, but not acyl-CoA. The chain is Phosphate acyltransferase from Anoxybacillus flavithermus (strain DSM 21510 / WK1).